The sequence spans 338 residues: Homeobox protein ceh-20 (338 aa).

The region spanning 4 to 187 (THPANLSELL…VMILRSRFLD (184 aa)) is the PBC domain. Positions 11–91 (ELLDAVLKIN…EGVAGPDKGG (81 aa)) are PBC-A. A PBC-B region spans residues 94-187 (GSDASGGDQA…VMILRSRFLD (94 aa)). The segment at residues 188–250 (ARRKRRNFSK…NKRIRYKKNM (63 aa)) is a DNA-binding region (homeobox; TALE-type).

It belongs to the TALE/PBX homeobox family. As to quaternary structure, interacts with Meis protein psa-3. Interacts with homeobox protein nob-1. As to expression, expressed in head dopaminergic neurons.

The protein resides in the nucleus. Functionally, transcription factor that binds to the 5'-TGATNNAT(G/T)(G/A)-3' PBC/Hox lineage enhancer region of sem-2 to promote cell fate specification in the postembryonic mesoderm (also known as the M lineage). Required for the M lineage-specific expression of the transcription factor, mls-2. Required for asymmetric division of the T hypodermal cell, probably acting via the regulation of asymmetric expression of Meis protein psa-3 in concert with homeobox protein nob-1 and the Wnt-MAPK pathway. Has a role in the mig-13 pathway to promote the guidance, migration and positioning of Q neuroblasts and their descendants along the anteroposterior body axis and the anterior migration of BDU interneurons. Also required for normal vulval formation. Plays a role in regulating gene expression in dopaminergic neurons, acting in midbody PDE neurons, and acting redundantly with ceh-40 in head neurons. May activate dopamine pathway genes in concert with ETS domain-containing protein ast-1, and homeobox proteins ceh-43 and ceh-40. In Caenorhabditis elegans, this protein is Homeobox protein ceh-20.